The sequence spans 849 residues: DNA mismatch repair protein MutS (849 aa).

602 to 609 (GPNMSGKS) provides a ligand contact to ATP.

It belongs to the DNA mismatch repair MutS family.

This protein is involved in the repair of mismatches in DNA. It is possible that it carries out the mismatch recognition step. This protein has a weak ATPase activity. The chain is DNA mismatch repair protein MutS from Streptococcus sanguinis (strain SK36).